The following is a 562-amino-acid chain: NAD-dependent malic enzyme (562 aa).

Residue Tyr101 is the Proton donor of the active site. Residue Arg154 coordinates NAD(+). The Proton acceptor role is filled by Lys172. A divalent metal cation-binding residues include Glu243, Asp244, and Asp267. Residues Asp267 and Asn415 each coordinate NAD(+).

It belongs to the malic enzymes family. As to quaternary structure, homotetramer. It depends on Mg(2+) as a cofactor. Mn(2+) is required as a cofactor.

The catalysed reaction is (S)-malate + NAD(+) = pyruvate + CO2 + NADH. It carries out the reaction oxaloacetate + H(+) = pyruvate + CO2. The chain is NAD-dependent malic enzyme from Aliivibrio fischeri (strain MJ11) (Vibrio fischeri).